The sequence spans 69 residues: uncharacterized protein (69 aa).

Residues 21–42 (MYAANKKSDARRRGKVGKEQWE) are disordered. Positions 35–69 (KVGKEQWEKEMEQYNIQKAQFEKELKEKKEKELKK) form a coiled coil.

This is an uncharacterized protein from Acheta domesticus (House cricket).